The primary structure comprises 224 residues: Germin-like protein 8-8 (224 aa).

Residues 1 to 22 (MASPSFCLLAALLALVSWQAIA) form the signal peptide. A disulfide bridge connects residues Cys-32 and Cys-47. In terms of domain architecture, Cupin type-1 spans 62–212 (AMLDTPRKTN…AFQVEKGTID (151 aa)). Residue Asn-76 is glycosylated (N-linked (GlcNAc...) asparagine). Mn(2+) contacts are provided by His-109, His-111, and Glu-116. Residue Asn-135 is glycosylated (N-linked (GlcNAc...) asparagine). His-157 serves as a coordination point for Mn(2+).

It belongs to the germin family. In terms of assembly, oligomer (believed to be a pentamer but probably hexamer).

Its subcellular location is the secreted. The protein localises to the extracellular space. It localises to the apoplast. Functionally, plays a role in broad-spectrum disease resistance. Probably has no oxalate oxidase activity even if the active site is conserved. The polypeptide is Germin-like protein 8-8 (Oryza sativa subsp. japonica (Rice)).